The chain runs to 616 residues: MPKYRSATTTHGRNMAGARALWRATGMTDADFGKPIIAVVNSFTQFVPGHVHLRDLGKLVAEQIEASGGVAKEFNTIAVDDGIAMGHGGMLYSLPSRELIADSVEYMVNAHCADAMVCISNCDKITPGMLMAALRLNIPAIFVSGGPMEAGKTKLSDQIIKLDLIDAMIQGANPKVSDEDSNQIERSACPTCGSCSGMFTANSMNCLTEALGLSQPGNGSLLATHADRKALFLNAGKRIVELTKRYYEQNDDSALPRSIATKAAFENAMMLDIAMGGSTNTVLHLLAAAQEGEVDFTMADIDRLSRQIPHLCKVAPSTQKYHMEDVHRAGGVIGILGELDRAGLLNRQVKNVLGLDLLQTLNQYDVMQTVDESVKEMYSAGPAGIRTTQAFSQDCRWPSLDTDRVEGCIRDIEHAYSRDGGLAVLFGNLAIDGCIVKTAGVDEGSLTFRGPAKVYESQEDAVDAILGGKVVAGDVVVIRYEGPKGGPGMQEMLYPTTYLKSVGLGKSCALITDGRFSGGTSGLSIGHVSPEAANGGLIGLVQDGDIIDIDIPLRKIRLDVDERILATRKEVEFARGDKSWTPKARERQVSLALRAYASLATSADKGAVRDKSKLGG.

Position 81 (Asp81) interacts with Mg(2+). Cys122 is a [2Fe-2S] cluster binding site. Residues Asp123 and Lys124 each contribute to the Mg(2+) site. Lys124 carries the post-translational modification N6-carboxylysine. Cys195 provides a ligand contact to [2Fe-2S] cluster. Residue Glu491 coordinates Mg(2+). Catalysis depends on Ser517, which acts as the Proton acceptor.

Belongs to the IlvD/Edd family. Homodimer. [2Fe-2S] cluster is required as a cofactor. It depends on Mg(2+) as a cofactor.

The enzyme catalyses (2R)-2,3-dihydroxy-3-methylbutanoate = 3-methyl-2-oxobutanoate + H2O. The catalysed reaction is (2R,3R)-2,3-dihydroxy-3-methylpentanoate = (S)-3-methyl-2-oxopentanoate + H2O. It participates in amino-acid biosynthesis; L-isoleucine biosynthesis; L-isoleucine from 2-oxobutanoate: step 3/4. It functions in the pathway amino-acid biosynthesis; L-valine biosynthesis; L-valine from pyruvate: step 3/4. Functions in the biosynthesis of branched-chain amino acids. Catalyzes the dehydration of (2R,3R)-2,3-dihydroxy-3-methylpentanoate (2,3-dihydroxy-3-methylvalerate) into 2-oxo-3-methylpentanoate (2-oxo-3-methylvalerate) and of (2R)-2,3-dihydroxy-3-methylbutanoate (2,3-dihydroxyisovalerate) into 2-oxo-3-methylbutanoate (2-oxoisovalerate), the penultimate precursor to L-isoleucine and L-valine, respectively. The protein is Dihydroxy-acid dehydratase of Photorhabdus laumondii subsp. laumondii (strain DSM 15139 / CIP 105565 / TT01) (Photorhabdus luminescens subsp. laumondii).